Reading from the N-terminus, the 174-residue chain is MIDSDGFRANVGIIICNRYGQVMWARRFGQHSWQFPQGGVDDGETAEEAMYRELYEEVGLRPEHVHILTSTRSWLRYRLPKRLVRQDSKPVCIGQKQKWFLLQLKSQDSAINLSSSGHPEFDDWRWVSYWYPVRQVVSFKRDVYRKVMKEFAVTALSFQTLEIPRKRGRQKTTG.

Residues 6-149 (GFRANVGIII…KRDVYRKVMK (144 aa)) enclose the Nudix hydrolase domain. The short motif at 38-59 (GGVDDGETAEEAMYRELYEEVG) is the Nudix box element.

It belongs to the Nudix hydrolase family. RppH subfamily. It depends on a divalent metal cation as a cofactor.

Accelerates the degradation of transcripts by removing pyrophosphate from the 5'-end of triphosphorylated RNA, leading to a more labile monophosphorylated state that can stimulate subsequent ribonuclease cleavage. The chain is RNA pyrophosphohydrolase from Shewanella baltica (strain OS223).